A 359-amino-acid polypeptide reads, in one-letter code: DNA integrity scanning protein DisA (359 aa).

The region spanning 7–146 (DEVLRQTLAI…NRRYVLEGSD (140 aa)) is the DAC domain. Residues Gly74, Leu92, and 105 to 109 (TRHRT) contribute to the ATP site.

This sequence belongs to the DisA family. In terms of assembly, homooctamer. Mg(2+) is required as a cofactor.

The enzyme catalyses 2 ATP = 3',3'-c-di-AMP + 2 diphosphate. Its function is as follows. Participates in a DNA-damage check-point. DisA forms globular foci that rapidly scan along the chromosomes searching for lesions. Also has diadenylate cyclase activity, catalyzing the condensation of 2 ATP molecules into cyclic di-AMP (c-di-AMP). c-di-AMP likely acts as a signaling molecule that may couple DNA integrity with a cellular process. This is DNA integrity scanning protein DisA from Kineococcus radiotolerans (strain ATCC BAA-149 / DSM 14245 / SRS30216).